The primary structure comprises 157 residues: Protein Smg homolog (157 aa).

It belongs to the Smg family.

In Tolumonas auensis (strain DSM 9187 / NBRC 110442 / TA 4), this protein is Protein Smg homolog.